Consider the following 106-residue polypeptide: Integration host factor subunit alpha (106 aa).

The protein belongs to the bacterial histone-like protein family. In terms of assembly, heterodimer of an alpha and a beta chain.

Its function is as follows. This protein is one of the two subunits of integration host factor, a specific DNA-binding protein that functions in genetic recombination as well as in transcriptional and translational control. The polypeptide is Integration host factor subunit alpha (Methylobacterium radiotolerans (strain ATCC 27329 / DSM 1819 / JCM 2831 / NBRC 15690 / NCIMB 10815 / 0-1)).